The following is a 220-amino-acid chain: Ribonuclease HII (220 aa).

Residues 1–219 (MMIAGIDEAG…VENIREELKK (219 aa)) form the RNase H type-2 domain. A divalent metal cation-binding residues include D7, E8, and D105.

Belongs to the RNase HII family. The cofactor is Mn(2+). Mg(2+) is required as a cofactor.

It is found in the cytoplasm. It catalyses the reaction Endonucleolytic cleavage to 5'-phosphomonoester.. Endonuclease that specifically degrades the RNA of RNA-DNA hybrids. This Methanosarcina mazei (strain ATCC BAA-159 / DSM 3647 / Goe1 / Go1 / JCM 11833 / OCM 88) (Methanosarcina frisia) protein is Ribonuclease HII.